The sequence spans 334 residues: Beta-glucanase (334 aa).

Positions 1-27 (MKNRVISLLMASLLLVLSVIVAPFYKA) are cleaved as a signal peptide. The GH16 domain occupies 28–248 (EAATVVNTPF…YVKYYPNGVP (221 aa)). Glutamate 136 acts as the Nucleophile in catalysis. The active-site Proton donor is glutamate 140. The tract at residues 246–265 (GVPQDNPTPTPTIAPSTPTN) is disordered. Positions 267 to 334 (NLPLKGDVNG…RYLIRAIPSL (68 aa)) constitute a Dockerin domain.

Belongs to the glycosyl hydrolase 16 family.

The catalysed reaction is Hydrolysis of (1-&gt;4)-beta-D-glucosidic linkages in beta-D-glucans containing (1-&gt;3)- and (1-&gt;4)-bonds.. The protein is Beta-glucanase (licB) of Acetivibrio thermocellus (Hungateiclostridium thermocellum).